A 457-amino-acid polypeptide reads, in one-letter code: Cysteine--tRNA ligase (457 aa).

A Zn(2+)-binding site is contributed by cysteine 27. A 'HIGH' region motif is present at residues 29–39; it reads ITPQSEPHIGH. Zn(2+) is bound by residues cysteine 207, histidine 232, and glutamate 236. The 'KMSKS' region signature appears at 265-269; that stretch reads KMSKS. Lysine 268 lines the ATP pocket.

The protein belongs to the class-I aminoacyl-tRNA synthetase family. As to quaternary structure, monomer. Zn(2+) is required as a cofactor.

The protein resides in the cytoplasm. It catalyses the reaction tRNA(Cys) + L-cysteine + ATP = L-cysteinyl-tRNA(Cys) + AMP + diphosphate. The protein is Cysteine--tRNA ligase of Dehalococcoides mccartyi (strain ATCC BAA-2100 / JCM 16839 / KCTC 5957 / BAV1).